The following is a 1393-amino-acid chain: Polarized growth protein RAX2 (1393 aa).

Residues 1 to 21 (MLVQFQQLLLLLISIIKLCQA) form the signal peptide. Topologically, residues 22–1329 (DDNDNSFFQP…TNKNLSRGKV (1308 aa)) are extracellular. Asn62, Asn85, Asn105, Asn125, Asn133, Asn139, Asn164, Asn186, Asn195, Asn212, Asn256, Asn260, Asn266, Asn269, Asn362, Asn398, Asn405, Asn479, Asn536, Asn542, Asn565, Asn599, Asn646, Asn649, Asn653, Asn674, Asn689, Asn696, Asn702, Asn714, Asn747, Asn764, Asn768, Asn792, Asn829, Asn863, Asn899, Asn935, Asn946, Asn958, Asn985, Asn1020, Asn1030, Asn1041, Asn1213, Asn1232, Asn1262, and Asn1323 each carry an N-linked (GlcNAc...) asparagine glycan. The helical transmembrane segment at 1330–1350 (VGISLACALGSTTLLGLLYII) threads the bilayer. Over 1351–1393 (PYFALFKNRKDGYFQPERIHEDEMMDAVNPEDLLHEIDLQREK) the chain is Cytoplasmic.

Belongs to the RAX2 family.

It localises to the cell membrane. The protein resides in the cell tip. In terms of biological role, required for establishing sites of emergence of yeast and hyphal daughters and for maintaining the linearity of hyphal growth, but not involved in responses that require a reorientation of the direction of already established hyphal growth (tropisms). Does not play a role in penetration or injury of human epithelial cells. The polypeptide is Polarized growth protein RAX2 (Candida albicans (strain SC5314 / ATCC MYA-2876) (Yeast)).